An 812-amino-acid polypeptide reads, in one-letter code: Probable inorganic carbon transporter subunit DabA (812 aa).

Zn(2+) contacts are provided by Cys338, Asp340, His498, and Cys513.

This sequence belongs to the inorganic carbon transporter (TC 9.A.2) DabA family. Forms a complex with DabB. Requires Zn(2+) as cofactor.

The protein resides in the cell inner membrane. In terms of biological role, part of an energy-coupled inorganic carbon pump. The chain is Probable inorganic carbon transporter subunit DabA from Methylobacterium sp. (strain 4-46).